Here is a 289-residue protein sequence, read N- to C-terminus: Acetylglutamate kinase (289 aa).

Residues 60 to 61, R82, and N186 contribute to the substrate site; that span reads GG.

The protein belongs to the acetylglutamate kinase family. ArgB subfamily.

The protein localises to the cytoplasm. It catalyses the reaction N-acetyl-L-glutamate + ATP = N-acetyl-L-glutamyl 5-phosphate + ADP. It functions in the pathway amino-acid biosynthesis; L-arginine biosynthesis; N(2)-acetyl-L-ornithine from L-glutamate: step 2/4. Catalyzes the ATP-dependent phosphorylation of N-acetyl-L-glutamate. The protein is Acetylglutamate kinase of Methanoculleus marisnigri (strain ATCC 35101 / DSM 1498 / JR1).